Here is a 205-residue protein sequence, read N- to C-terminus: Glycerol-3-phosphate acyltransferase (205 aa).

The next 5 membrane-spanning stretches (helical) occupy residues 4-24 (IAPG…AILV), 56-76 (VAVL…AYAL), 81-101 (FWLG…VFFG), 112-132 (FGAI…TWLL), and 138-158 (GYSS…VWWF).

Belongs to the PlsY family. As to quaternary structure, probably interacts with PlsX.

The protein localises to the cell inner membrane. It carries out the reaction an acyl phosphate + sn-glycerol 3-phosphate = a 1-acyl-sn-glycero-3-phosphate + phosphate. Its pathway is lipid metabolism; phospholipid metabolism. In terms of biological role, catalyzes the transfer of an acyl group from acyl-phosphate (acyl-PO(4)) to glycerol-3-phosphate (G3P) to form lysophosphatidic acid (LPA). This enzyme utilizes acyl-phosphate as fatty acyl donor, but not acyl-CoA or acyl-ACP. The chain is Glycerol-3-phosphate acyltransferase from Citrobacter koseri (strain ATCC BAA-895 / CDC 4225-83 / SGSC4696).